We begin with the raw amino-acid sequence, 224 residues long: uncharacterized protein (224 aa).

This is an uncharacterized protein from Mycobacterium tuberculosis (strain ATCC 25618 / H37Rv).